A 693-amino-acid polypeptide reads, in one-letter code: Polyribonucleotide nucleotidyltransferase (693 aa).

Residues Asp489 and Asp495 each contribute to the Mg(2+) site. In terms of domain architecture, KH spans 556-615; it reads PQIHVMNINPAKIKDVVGRGGATVKGIVEKTGAQIDTSDSGEVKVFAKDKKSMDMAVAMI. The S1 motif domain occupies 625 to 693; the sequence is GQVYKGKIVK…GRVKLSLVAR (69 aa).

The protein belongs to the polyribonucleotide nucleotidyltransferase family. In terms of assembly, component of the RNA degradosome, which is a multiprotein complex involved in RNA processing and mRNA degradation. The cofactor is Mg(2+).

It is found in the cytoplasm. The catalysed reaction is RNA(n+1) + phosphate = RNA(n) + a ribonucleoside 5'-diphosphate. Its function is as follows. Involved in mRNA degradation. Catalyzes the phosphorolysis of single-stranded polyribonucleotides processively in the 3'- to 5'-direction. In Francisella tularensis subsp. tularensis (strain WY96-3418), this protein is Polyribonucleotide nucleotidyltransferase.